Here is a 602-residue protein sequence, read N- to C-terminus: ATP-dependent RNA helicase DeaD (602 aa).

The short motif at 6-34 (MTFSSFGLNSCIITALNDIGYVQPSPIQA) is the Q motif element. The region spanning 37 to 208 (IPYLIKGKDV…RRFMKNPKEI (172 aa)) is the Helicase ATP-binding domain. An ATP-binding site is contributed by 50–57 (AQTGSGKT). A DEAD box motif is present at residues 156–159 (DEAD). The region spanning 231-378 (KTDALIRFLE…EVNLPKSDFL (148 aa)) is the Helicase C-terminal domain.

This sequence belongs to the DEAD box helicase family. DeaD/CsdA subfamily.

Its subcellular location is the cytoplasm. The enzyme catalyses ATP + H2O = ADP + phosphate + H(+). DEAD-box RNA helicase involved in various cellular processes at low temperature, including ribosome biogenesis, mRNA degradation and translation initiation. This chain is ATP-dependent RNA helicase DeaD, found in Buchnera aphidicola subsp. Baizongia pistaciae (strain Bp).